The chain runs to 235 residues: Aspartate/glutamate leucyltransferase (235 aa).

It belongs to the R-transferase family. Bpt subfamily.

The protein localises to the cytoplasm. It carries out the reaction N-terminal L-glutamyl-[protein] + L-leucyl-tRNA(Leu) = N-terminal L-leucyl-L-glutamyl-[protein] + tRNA(Leu) + H(+). It catalyses the reaction N-terminal L-aspartyl-[protein] + L-leucyl-tRNA(Leu) = N-terminal L-leucyl-L-aspartyl-[protein] + tRNA(Leu) + H(+). Its function is as follows. Functions in the N-end rule pathway of protein degradation where it conjugates Leu from its aminoacyl-tRNA to the N-termini of proteins containing an N-terminal aspartate or glutamate. The chain is Aspartate/glutamate leucyltransferase from Pseudomonas fluorescens (strain Pf0-1).